The sequence spans 399 residues: S-adenosylmethionine synthase (399 aa).

His17 is an ATP binding site. Position 19 (Asp19) interacts with Mg(2+). Glu45 contacts K(+). Glu58 and Gln101 together coordinate L-methionine. The tract at residues 101-111 (QSADIAMGVDQ) is flexible loop. ATP is bound by residues 177–179 (DGK), 244–245 (RF), Asp253, 259–260 (RK), Ala276, and Lys280. An L-methionine-binding site is contributed by Asp253. An L-methionine-binding site is contributed by Lys284.

It belongs to the AdoMet synthase family. As to quaternary structure, homotetramer; dimer of dimers. The cofactor is Mg(2+). K(+) serves as cofactor.

It localises to the cytoplasm. It catalyses the reaction L-methionine + ATP + H2O = S-adenosyl-L-methionine + phosphate + diphosphate. Its pathway is amino-acid biosynthesis; S-adenosyl-L-methionine biosynthesis; S-adenosyl-L-methionine from L-methionine: step 1/1. Functionally, catalyzes the formation of S-adenosylmethionine (AdoMet) from methionine and ATP. The overall synthetic reaction is composed of two sequential steps, AdoMet formation and the subsequent tripolyphosphate hydrolysis which occurs prior to release of AdoMet from the enzyme. The protein is S-adenosylmethionine synthase of Bacillus anthracis (strain A0248).